Consider the following 1225-residue polypeptide: Structural maintenance of chromosomes protein 1 (1225 aa).

33–40 (GPNGSGKS) serves as a coordination point for ATP. The stretch at 173–489 (SGSIQYKKEY…SANNQEYDLN (317 aa)) forms a coiled coil. An SMC hinge domain is found at 527–641 (PGVKGLVHDL…CNTLNIAKDL (115 aa)). A coiled-coil region spans residues 679 to 1063 (KEEYQSLMSL…LKIKKKRKEL (385 aa)). Positions 1057-1061 (KKKRK) match the Nuclear localization signal motif.

The protein belongs to the SMC family. SMC1 subfamily. In terms of assembly, cohesin complexes are composed of the SMC1 and SMC3 heterodimer attached via their SMC hinge domain, MCD1/SCC1 which link them, and IRR1/SCC3, which interacts with MCD1. The cohesin complex also interacts with SCC2, which is required for its association with chromosomes.

It is found in the nucleus. It localises to the chromosome. In terms of biological role, involved in chromosome cohesion during cell cycle and in DNA repair. Central component of cohesin complex. The cohesin complex is required for the cohesion of sister chromatids after DNA replication. The cohesin complex apparently forms a large proteinaceous ring within which sister chromatids can be trapped. At anaphase, the complex is cleaved and dissociates from chromatin, allowing sister chromatids to segregate. The polypeptide is Structural maintenance of chromosomes protein 1 (SMC1) (Saccharomyces cerevisiae (strain ATCC 204508 / S288c) (Baker's yeast)).